Reading from the N-terminus, the 131-residue chain is Profilin (131 aa).

This sequence belongs to the profilin family. In terms of assembly, occurs in many kinds of cells as a complex with monomeric actin in a 1:1 ratio.

Its subcellular location is the cytoplasm. The protein localises to the cytoskeleton. Functionally, binds to actin and affects the structure of the cytoskeleton. At high concentrations, profilin prevents the polymerization of actin, whereas it enhances it at low concentrations. By binding to PIP2, it inhibits the formation of IP3 and DG. In Capsicum annuum (Capsicum pepper), this protein is Profilin.